A 976-amino-acid polypeptide reads, in one-letter code: Peptidylglycine alpha-amidating monooxygenase (976 aa).

Positions 1-25 (MAGRARSGLLLLLLGLLALQSSCLA) are cleaved as a signal peptide. The tract at residues 1–497 (MAGRARSGLL…EGPWEPEPSG (497 aa)) is peptidylglycine alpha-hydroxylating monooxygenase. The propeptide occupies 26 to 35 (FRSPLSVFKR). Over 36–866 (FKETTRSFSN…QKLSTEPGSG (831 aa)) the chain is Intragranular. Disulfide bonds link cysteine 47–cysteine 186, cysteine 81–cysteine 126, cysteine 114–cysteine 131, cysteine 227–cysteine 334, and cysteine 293–cysteine 315. Residues histidine 107 and histidine 108 each coordinate Cu(2+). Positions 172, 242, 244, and 314 each coordinate Cu(2+). A peptidyl-alpha-hydroxyglycine alpha-amidating lyase region spans residues 498–820 (DFHVEEELDW…LTEKMEHRSV (323 aa)). NHL repeat units lie at residues 501-544 (VEEE…NSFD), 570-611 (AEIL…LDPH), 620-665 (LGRS…FSPS), and 673-717 (GEES…FKTD). Valine 520 serves as a coordination point for Ca(2+). Residue arginine 533 coordinates a protein. Histidine 585 serves as a coordination point for Zn(2+). Leucine 587 contributes to the Ca(2+) binding site. A disulfide bond links cysteine 634 and cysteine 655. Tyrosine 654 lines the a protein pocket. Residue histidine 690 participates in Zn(2+) binding. An intrachain disulfide couples cysteine 702 to cysteine 713. An a protein-binding site is contributed by arginine 706. Residue asparagine 765 is glycosylated (N-linked (GlcNAc...) asparagine). The NHL 5 repeat unit spans residues 769 to 812 (GEIIDVFKPVRKHFDMPHDIVASEDGTVYIGDAHTNTVWKFTLT). Valine 774 carries the sulfotyrosine modification. Histidine 786 serves as a coordination point for Zn(2+). A Ca(2+)-binding site is contributed by aspartate 787. The residue at position 792 (glutamate 792) is a Sulfotyrosine. Residues 867–890 (VSVVLITTLLVIPVLVLLAIVMFI) traverse the membrane as a helical segment. At 891 to 976 (RWKKSRAFGD…APLPKPAPSS (86 aa)) the chain is on the cytoplasmic side. Serine 921, serine 932, and serine 945 each carry phosphoserine. Residues 928–945 (NFFASRKGYSRKGFDRVS) form an interaction with RASSF9 region. A disordered region spans residues 940–976 (GFDRVSTEGSDQEKDEDDGTESEEEYSAPLPKPAPSS). Threonine 946 carries the phosphothreonine modification. At serine 949 the chain carries Phosphoserine. The segment covering 952–965 (EKDEDDGTESEEEY) has biased composition (acidic residues). The residue at position 959 (threonine 959) is a Phosphothreonine. Serine 961 is subject to Phosphoserine.

It in the C-terminal section; belongs to the peptidyl-alpha-hydroxyglycine alpha-amidating lyase family. This sequence in the N-terminal section; belongs to the copper type II ascorbate-dependent monooxygenase family. In terms of assembly, monomer. Interacts with RASSF9. Requires Zn(2+) as cofactor. It depends on Cu(2+) as a cofactor.

Its subcellular location is the cytoplasmic vesicle. It is found in the secretory vesicle membrane. It localises to the membrane. The protein localises to the secreted. The enzyme catalyses a [peptide]-C-terminal glycine + 2 L-ascorbate + O2 = a [peptide]-C-terminal (2S)-2-hydroxyglycine + 2 monodehydro-L-ascorbate radical + H2O. It carries out the reaction a [peptide]-C-terminal (2S)-2-hydroxyglycine = a [peptide]-C-terminal amide + glyoxylate. The catalysed reaction is N-dodecanoylglycine + 2 L-ascorbate + O2 = N-dodecanoyl-(2S)-hydroxyglycine + 2 monodehydro-L-ascorbate radical + H2O. It catalyses the reaction N-dodecanoyl-(2S)-hydroxyglycine = dodecanamide + glyoxylate. The enzyme catalyses N-(9Z,12Z,15Z)-octadecatrienoylglycine + 2 L-ascorbate + O2 = N-(9Z,12Z,15Z)-octadecatrienoyl-(2S)-hydroxyglycine + 2 monodehydro-L-ascorbate radical + H2O. It carries out the reaction N-(9Z,12Z,15Z)-octadecatrienoyl-(2S)-hydroxyglycine = (9Z,12Z,15Z)-octadecatrienamide + glyoxylate. The catalysed reaction is N-(9Z-octadecenoyl)glycine + 2 L-ascorbate + O2 = N-(9Z-octadecenoyl)-(2S)-hydroxyglycine + 2 monodehydro-L-ascorbate radical + H2O. It catalyses the reaction N-(9Z-octadecenoyl)-(2S)-hydroxyglycine = (9Z)-octadecenamide + glyoxylate. The enzyme catalyses N-tetradecanoylglycine + 2 L-ascorbate + O2 = N-tetradecanoyl-(2S)-hydroxyglycine + 2 monodehydro-L-ascorbate radical + H2O. It carries out the reaction N-tetradecanoyl-(2S)-hydroxyglycine = tetradecamide + glyoxylate. The catalysed reaction is N-decanoylglycine + 2 L-ascorbate + O2 = N-decanoyl-(2S)-hydroxyglycine + 2 monodehydro-L-ascorbate radical + H2O. It catalyses the reaction N-decanoyl-(2S)-hydroxyglycine = decanamide + glyoxylate. The enzyme catalyses N-octanoylglycine + 2 L-ascorbate + O2 = N-octanoyl-(2S)-hydroxyglycine + 2 monodehydro-L-ascorbate radical + H2O. It carries out the reaction N-octanoyl-(2S)-hydroxyglycine = octanamide + glyoxylate. Its activity is regulated as follows. PAM activity is inhibited by EDTA, phenylglyoxal and diethyl pyrocarbonate. PAL activity is stimulated by cadmium and inhibited by mercury. Functionally, bifunctional enzyme that catalyzes amidation of the C-terminus of proteins. Alpha-amidation is present at the C-terminus of many endocrine hormones and neuropeptides and is required for their activity. C-terminal amidation also takes place in response to protein fragmentation triggered by oxidative stress, promoting degradation of amidated protein fragments by the proteasome. Alpha-amidation involves two sequential reactions, both of which are catalyzed by separate catalytic domains of the enzyme. The first step, catalyzed by peptidyl alpha-hydroxylating monooxygenase (PHM) domain, is the copper-, ascorbate-, and O2- dependent stereospecific hydroxylation (with S stereochemistry) at the alpha-carbon (C-alpha) of the C-terminal glycine of the peptidylglycine substrate. The second step, catalyzed by the peptidylglycine amidoglycolate lyase (PAL) domain, is the zinc-dependent cleavage of the N-C-alpha bond, producing the alpha-amidated peptide and glyoxylate. Similarly, catalyzes the two-step conversion of an N-fatty acylglycine to a primary fatty acid amide and glyoxylate. The protein is Peptidylglycine alpha-amidating monooxygenase of Rattus norvegicus (Rat).